Reading from the N-terminus, the 358-residue chain is Putative spore germination protein YfkT (358 aa).

10 consecutive transmembrane segments (helical) span residues 10 to 30 (LFFG…ILMI), 36 to 56 (NAWH…WLMH), 81 to 101 (IIIL…IRFF), 107 to 127 (ILFL…FVAI), 143 to 163 (IFLF…ATQI), 179 to 199 (LQSG…PLLF), 210 to 230 (IFAI…SISV), 262 to 282 (IIAA…LYIV), 297 to 317 (AMYT…FLNT), and 326 to 346 (IKPI…YLII).

Belongs to the amino acid-polyamine-organocation (APC) superfamily. Spore germination protein (SGP) (TC 2.A.3.9) family.

It is found in the cell membrane. Functionally, may be involved in spore germination. The polypeptide is Putative spore germination protein YfkT (yfkT) (Bacillus subtilis (strain 168)).